The chain runs to 122 residues: Large ribosomal subunit protein uL14 (122 aa).

Belongs to the universal ribosomal protein uL14 family. In terms of assembly, part of the 50S ribosomal subunit. Forms a cluster with proteins L3 and L19. In the 70S ribosome, L14 and L19 interact and together make contacts with the 16S rRNA in bridges B5 and B8.

Functionally, binds to 23S rRNA. Forms part of two intersubunit bridges in the 70S ribosome. The protein is Large ribosomal subunit protein uL14 of Bordetella avium (strain 197N).